The following is a 460-amino-acid chain: Argininosuccinate lyase (460 aa).

The protein belongs to the lyase 1 family. Argininosuccinate lyase subfamily.

The protein resides in the cytoplasm. The catalysed reaction is 2-(N(omega)-L-arginino)succinate = fumarate + L-arginine. It functions in the pathway amino-acid biosynthesis; L-arginine biosynthesis; L-arginine from L-ornithine and carbamoyl phosphate: step 3/3. The protein is Argininosuccinate lyase of Prosthecochloris aestuarii (strain DSM 271 / SK 413).